A 1789-amino-acid polypeptide reads, in one-letter code: Genome polyprotein (1789 aa).

The disordered stretch occupies residues 1-25 (MMMASKDVVPTAASSENANNNSSIK). Residues 1–183 (MMMASKDVVP…MCPLPPVDQR (183 aa)) are interaction with host MAP1LC3A/LC3. The segment covering 12–23 (AASSENANNNSS) has biased composition (low complexity). The tract at residues 184–398 (STTPATEPTI…ASLLPDFHLQ (215 aa)) is interaction with NTPase. The interval 301-398 (HPTQDWSRDT…ASLLPDFHLQ (98 aa)) is interaction with NS4. Host ER membrane association regions lie at residues 318–349 (KLEM…KPLN) and 360–398 (TFMG…FHLQ). Residues 399–574 (GPEDLARDLV…GKTKAAEHLA (176 aa)) form an interaction with NS1-2 and NS4 and homooligomerization region. Residues 532–697 (RISMARAALA…EHTRKVSPGD (166 aa)) form the SF3 helicase domain. 560–567 (GPPGIGKT) is a binding site for ATP. The tract at residues 651 to 756 (AIVITTNAPG…AVALTMERQD (106 aa)) is important for mitochondrion targeting. Residues 826–832 (YIIESDG) are functions as endoplasmic reticulum export signal. The interval 865-910 (RAVAYASCFQSAITTILQMAGSALVINRAVKRMFGTRTAAMALEGP) is host membrane association. Residues 958–981 (DAVPEGKNKGKTKKGRGRKNNYNA) are disordered. Positions 966-976 (KGKTKKGRGRK) are enriched in basic residues. The acidic stretch occupies residues 989–994 (DEEYEE). Tyr992 bears the O-(5'-phospho-RNA)-tyrosine mark. The interaction with host EIF4G stretch occupies residues 1084 to 1100 (WADDDREVDYNEKINFE). A Peptidase C37 domain is found at 1101 to 1281 (APPTLWSRVT…QAGEGETALE (181 aa)). Residues His1130, Glu1154, and Cys1239 each act as for 3CLpro activity in the active site. The region spanning 1516–1637 (KNHFDADYTA…STDIDFDPAR (122 aa)) is the RdRp catalytic domain. Asp1520, Asp1522, Asp1624, and Glu1625 together coordinate Mg(2+).

As to quaternary structure, homodimer. Homooligomer. Interacts with NTPase; this interaction increases the proapoptotic activity of the NTPase and is crucial for the formation of the viral replication complex. Interacts with NS4; this interaction is crucial for the formation of the viral replication complex. Interacts (via N-terminus) with host VAPA. Interacts with host MAP1LC3A/LC3; this interaction does not seem to be linked to host autophagy, but rather plays a role in the formation of viral factories. In terms of assembly, homooligomer. Interacts with NS1-2; this interaction increases the proapoptotic activity of the NTPase and is crucial for the formation of the viral replication complex. Interacts with NS4; this interaction increases the proapoptotic activity of the NTPase. Homodimer. Monomer; in solution. As to quaternary structure, interacts with NTPase; this interaction increases the proapoptotic activity of the NTPase. Interacts with NS1-2; this interaction is crucial for the formation of the viral replication complex. In terms of assembly, monomer. Interacts with the RNA-directed RNA polymerase; this interaction induces the multimerization of the RdRp and enhances its activity. Interacts with host IEF4G1; this interaction plays a role in translation of viral proteins. Homohexamer; also forms fibrous hexameric oligomer. Interacts with the viral genome-linked protein; this interaction induces the multimerization of the RdRp and enhances its activity. Mg(2+) is required as a cofactor. Mn(2+) serves as cofactor. In terms of processing, specific enzymatic cleavages in vivo yield mature proteins. 3CLpro is first autocatalytically cleaved, then processes the whole polyprotein. NS1/2-3 and NS3-4 sites are cleaved rapidly and NS4-5, NS5-6, and NS6-7 sites are processed subsequently and less efficiently. VPg is uridylylated by the polymerase and is covalently attached to the 5'-end of the polyadenylated genomic and subgenomic RNAs. This uridylylated form acts as a nucleotide-peptide primer for the polymerase. Post-translationally, cleaved by host CASP3/caspase 3 at 18-22 h.p.i. The cleavage allows NS1 secretion, which is essential for intestinal infection and resistance to IFN-lambda.

The protein localises to the host Golgi apparatus membrane. It is found in the secreted. It localises to the host endoplasmic reticulum membrane. The protein resides in the host cytoplasm. Its subcellular location is the host perinuclear region. The enzyme catalyses a ribonucleoside 5'-triphosphate + H2O = a ribonucleoside 5'-diphosphate + phosphate + H(+). It carries out the reaction Endopeptidase with a preference for cleavage when the P1 position is occupied by Glu-|-Xaa and the P1' position is occupied by Gly-|-Yaa.. The catalysed reaction is RNA(n) + a ribonucleoside 5'-triphosphate = RNA(n+1) + diphosphate. Its activity is regulated as follows. Inhibited by the chemical compound K36/GC376, which covalently binds to the nucleophilic cysteine residue. Inhibited by various macrocyclic inhibitors. Inhibited by the guanidine salt GuHCl. In terms of biological role, induces the proliferation of the host smooth ER membranes forming long tubular structures. These remodeled membranes probably form the viral factories that contain the replication complex. Induces the disassembly of host Golgi. May play a role in viral replication by interacting with host VAPA, a vesicle-associated membrane protein that plays a role in SNARE-mediated vesicle fusion. This interaction may target replication complex to intracellular membranes. Functionally, displays NTPase activity and RNA helix-unwinding activity. Displays RNA chaperone-like activity and destabilizes dsRNA. Induces the formation of convoluted membranes derived from the host ER. These remodeled membranes probably form the viral factories that contain the replication complex. Initiates host cell death by targeting the mitochondrial outer membrane, leading to the permeabilization of mitochondria, programmed host cell death and viral egress. Probably plays a role in preventing the assembly of host stress granules. Its function is as follows. Probable key protein responsible for the formation of membrane alterations by the virus. Induces the formation of convoluted membranes derived from the host ER. These remodeled membranes probably form the viral factories that contain the replication complex. May play a role in targeting replication complex to intracellular membranes. Induces the disassembly of host Golgi and antagonism of Golgi-dependent cellular protein secretion, probably via the mislocalization of COPII-coated vesicles. Viral genome-linked protein is covalently linked to the 5'-end of the positive-strand, negative-strand genomic RNAs and subgenomic RNA. Acts as a genome-linked replication primer. May recruit ribosome to viral RNA thereby promoting viral proteins translation. Interacts with host translation initiation complex to allow the translation of viral proteins. Induces the formation of aggregates of RNA-directed RNA polymerase in the presence of RNA. Through its interaction with the viral RNA-directed RNA polymerase, plays a crucial role in enhancing the polymerase activity. In terms of biological role, processes the polyprotein. 3CLpro-RdRp is first released by autocleavage, then all other proteins are cleaved. May cleave host polyadenylate-binding protein thereby inhibiting cellular translation. Functionally, replicates genomic and antigenomic RNA by recognizing replications specific signals. Also transcribes a subgenomic mRNA by initiating RNA synthesis internally on antigenomic RNA. This sgRNA codes for structural proteins. Catalyzes the covalent attachment VPg with viral RNAs. This is Genome polyprotein from Norovirus (strain Human/NoV/United States/Norwalk/1968/GI) (Hu/NV/NV/1968/US).